The following is a 374-amino-acid chain: Large ribosomal subunit protein bL27m (374 aa).

Residues 1 to 41 constitute a mitochondrion transit peptide; it reads MLRLSGVKSAVRARAAAGAAFSVSLSGPQAVSLLALPLVRH.

Belongs to the bacterial ribosomal protein bL27 family.

The protein resides in the mitochondrion. Component of the large subunit of mitochondrial ribosome. This chain is Large ribosomal subunit protein bL27m (MRPL2), found in Yarrowia lipolytica (strain CLIB 122 / E 150) (Yeast).